Consider the following 38-residue polypeptide: Large ribosomal subunit protein bL36A (38 aa).

The protein belongs to the bacterial ribosomal protein bL36 family.

In Pectobacterium atrosepticum (strain SCRI 1043 / ATCC BAA-672) (Erwinia carotovora subsp. atroseptica), this protein is Large ribosomal subunit protein bL36A.